Consider the following 238-residue polypeptide: Tritrans,polycis-undecaprenyl-diphosphate synthase (geranylgeranyl-diphosphate specific) (238 aa).

Residue Asp-18 is part of the active site. Asp-18 lines the Mg(2+) pocket. Substrate-binding positions include Gly-19–Arg-22 and Ser-64–Glu-66. Asn-67 functions as the Proton acceptor in the catalytic mechanism. Substrate is bound by residues Arg-70, Arg-187, and Arg-193 to Ser-195. Glu-206 serves as a coordination point for Mg(2+).

This sequence belongs to the UPP synthase family. In terms of assembly, homodimer. The cofactor is Mg(2+).

It carries out the reaction geranylgeranyl diphosphate + 7 isopentenyl diphosphate = tri-trans,hepta-cis-undecaprenyl diphosphate + 7 diphosphate. Its function is as follows. Catalyzes the sequential condensation of isopentenyl diphosphate (IPP) with geranylgeranyl diphosphate (GGPP) to yield (2Z,6Z,10Z,14Z,18Z,22Z,26Z,30E,34E,38E)-undecaprenyl diphosphate (tritrans,heptacis-UPP). It is probably the precursor of glycosyl carrier lipids. This chain is Tritrans,polycis-undecaprenyl-diphosphate synthase (geranylgeranyl-diphosphate specific), found in Pyrobaculum aerophilum (strain ATCC 51768 / DSM 7523 / JCM 9630 / CIP 104966 / NBRC 100827 / IM2).